The sequence spans 353 residues: Delta-aminolevulinic acid dehydratase (353 aa).

The Schiff-base intermediate with substrate role is filled by lysine 221. Residues arginine 231 and lysine 244 each coordinate 5-aminolevulinate. Position 260 (glutamate 260) interacts with Mg(2+). The active-site Schiff-base intermediate with substrate is lysine 275. 2 residues coordinate 5-aminolevulinate: serine 301 and tyrosine 340.

This sequence belongs to the ALAD family. In terms of assembly, homooctamer. Requires Mg(2+) as cofactor.

The catalysed reaction is 2 5-aminolevulinate = porphobilinogen + 2 H2O + H(+). The protein operates within porphyrin-containing compound metabolism; protoporphyrin-IX biosynthesis; coproporphyrinogen-III from 5-aminolevulinate: step 1/4. Its function is as follows. Catalyzes an early step in the biosynthesis of tetrapyrroles. Binds two molecules of 5-aminolevulinate per subunit, each at a distinct site, and catalyzes their condensation to form porphobilinogen. Required for nodule development. The protein is Delta-aminolevulinic acid dehydratase (hemB) of Bradyrhizobium diazoefficiens (strain JCM 10833 / BCRC 13528 / IAM 13628 / NBRC 14792 / USDA 110).